The chain runs to 51 residues: Probable antitoxin PhoAT (51 aa).

This sequence belongs to the PhoAT antitoxin family. Interacts with toxin PhoH2.

Its function is as follows. Antitoxin component of a type II toxin-antitoxin (TA) system. The cognate antitoxin is PhoAT; the toxin gene cannot be expressed in the absence of the antitoxin gene in M.smegmatis (strain mc(2)4517), and abrogates the toxic effects of PhoH2 in M.smegmatis strain mc(2)155. This Mycobacterium tuberculosis (strain ATCC 25618 / H37Rv) protein is Probable antitoxin PhoAT.